Consider the following 323-residue polypeptide: D-alanine--D-alanine ligase (323 aa).

Residues 102 to 300 enclose the ATP-grasp domain; that stretch reads KQIFRAEGIP…FTELVERMLQ (199 aa). Residue 130 to 185 coordinates ATP; that stretch reads VARLGSPLVVKPSNSGSTVGISLARDEVSLAQGLALASSVSSRVFLERYIPGKEIT. Positions 254, 267, and 269 each coordinate Mg(2+).

Belongs to the D-alanine--D-alanine ligase family. The cofactor is Mg(2+). Mn(2+) is required as a cofactor.

It localises to the cytoplasm. It carries out the reaction 2 D-alanine + ATP = D-alanyl-D-alanine + ADP + phosphate + H(+). It participates in cell wall biogenesis; peptidoglycan biosynthesis. Cell wall formation. This is D-alanine--D-alanine ligase from Synechococcus sp. (strain JA-3-3Ab) (Cyanobacteria bacterium Yellowstone A-Prime).